Consider the following 619-residue polypeptide: Polyadenylate-binding protein 1-like (619 aa).

4 RRM domains span residues 11-89, 99-175, 191-268, and 294-370; these read ASLY…WSQR, GNIF…HFKS, TNIY…RAQK, and VNLY…LAQR. Residues 431–458 form a disordered region; sequence PAPRWTSQPPRPSSAYPPGASMVRPPVV. A PABC domain is found at 533–610; sequence QEPLTASMLA…AVAVLQAHQA (78 aa).

This sequence belongs to the polyadenylate-binding protein type-1 family. As to expression, expressed in ovary and testis. Also expressed in pancreas, liver and thymus, and at lower levels in other somatic tissues including brain and lung.

It is found in the cytoplasm. Its function is as follows. Poly(A)-binding protein involved in oocyte maturation and early embryo development. It is required for cytosolic mRNA polyadenylation and translational activation of maternally stored mRNA in oocytes. The sequence is that of Polyadenylate-binding protein 1-like from Homo sapiens (Human).